The following is a 440-amino-acid chain: VGFKAGVKDYRLTYYTPDYPTKDTDILAAFRMTPQPGVPPEEAGAAVAAESSTGTWTTVWTDGLTSLDRYKGRCYDIEPVSGEDKQYIAYLAYPLDLFEEGSVTNLFTSIVGNVFGFKALRALRLEDLRIPPAYSKTFIGPPHGIQVERDKLNKYGRPLLGCTIKPKLGLSAKNYGRAVYECLRGGLDFTKDDENVNSQPFMRWRDRFLFVAEALFKAQAETGEIKGHYLNATAGTCEEMMKRAVFARELGAPIVMHDYLTGGFTANTSLAFYCRDNGLLLHIHRAMHAVIDRQRNHGIHFRVLAKALRMSGGDHIHAGTVVGKLEGEREVTLGFVDLLRDDYIEKDRSRGIYFTQDWVSMPGVLPVASGGIHVWHMPALTEIFGDDSVLQFGGGTLGHPWGNAPGAVANRVASEACVQARNEGRDLAREGNEIIREACK.

At Lys4 the chain carries N6,N6,N6-trimethyllysine. 2 residues coordinate substrate: Asn113 and Thr163. Lys165 (proton acceptor) is an active-site residue. Residue Lys167 participates in substrate binding. 3 residues coordinate Mg(2+): Lys191, Asp193, and Glu194. Lys191 carries the post-translational modification N6-carboxylysine. His284 serves as the catalytic Proton acceptor. Residues Arg285, His317, and Ser369 each coordinate substrate.

The protein belongs to the RuBisCO large chain family. Type I subfamily. In terms of assembly, heterohexadecamer of 8 large chains and 8 small chains; disulfide-linked. The disulfide link is formed within the large subunit homodimers. It depends on Mg(2+) as a cofactor. Post-translationally, the disulfide bond which can form in the large chain dimeric partners within the hexadecamer appears to be associated with oxidative stress and protein turnover.

The protein resides in the plastid. It localises to the chloroplast. It carries out the reaction 2 (2R)-3-phosphoglycerate + 2 H(+) = D-ribulose 1,5-bisphosphate + CO2 + H2O. The catalysed reaction is D-ribulose 1,5-bisphosphate + O2 = 2-phosphoglycolate + (2R)-3-phosphoglycerate + 2 H(+). RuBisCO catalyzes two reactions: the carboxylation of D-ribulose 1,5-bisphosphate, the primary event in carbon dioxide fixation, as well as the oxidative fragmentation of the pentose substrate in the photorespiration process. Both reactions occur simultaneously and in competition at the same active site. This chain is Ribulose bisphosphate carboxylase large chain, found in Dicksonia antarctica (Australian tree fern).